The chain runs to 66 residues: MNNSMINPSIVDLLTKVGDRYSLVILTSKRAREIIEGAEPLIKVDSHKPLTIAINEVNEDIVKYEE.

The protein belongs to the RNA polymerase subunit omega family. As to quaternary structure, the RNAP catalytic core consists of 2 alpha, 1 beta, 1 beta' and 1 omega subunit. When a sigma factor is associated with the core the holoenzyme is formed, which can initiate transcription.

It carries out the reaction RNA(n) + a ribonucleoside 5'-triphosphate = RNA(n+1) + diphosphate. Its function is as follows. Promotes RNA polymerase assembly. Latches the N- and C-terminal regions of the beta' subunit thereby facilitating its interaction with the beta and alpha subunits. The chain is DNA-directed RNA polymerase subunit omega from Clostridium botulinum (strain Alaska E43 / Type E3).